Here is a 143-residue protein sequence, read N- to C-terminus: Large ribosomal subunit protein uL16 (143 aa).

Belongs to the universal ribosomal protein uL16 family. As to quaternary structure, part of the 50S ribosomal subunit.

Its function is as follows. Binds 23S rRNA and is also seen to make contacts with the A and possibly P site tRNAs. The polypeptide is Large ribosomal subunit protein uL16 (Thermosynechococcus vestitus (strain NIES-2133 / IAM M-273 / BP-1)).